Here is an 83-residue protein sequence, read N- to C-terminus: Exodeoxyribonuclease 7 small subunit (83 aa).

It belongs to the XseB family. As to quaternary structure, heterooligomer composed of large and small subunits.

The protein localises to the cytoplasm. It carries out the reaction Exonucleolytic cleavage in either 5'- to 3'- or 3'- to 5'-direction to yield nucleoside 5'-phosphates.. Bidirectionally degrades single-stranded DNA into large acid-insoluble oligonucleotides, which are then degraded further into small acid-soluble oligonucleotides. The protein is Exodeoxyribonuclease 7 small subunit of Rhizobium rhizogenes (strain K84 / ATCC BAA-868) (Agrobacterium radiobacter).